The following is a 442-amino-acid chain: D-serine dehydratase (442 aa).

K118 is subject to N6-(pyridoxal phosphate)lysine.

This sequence belongs to the serine/threonine dehydratase family. DsdA subfamily. In terms of assembly, monomer. The cofactor is pyridoxal 5'-phosphate.

It catalyses the reaction D-serine = pyruvate + NH4(+). This is D-serine dehydratase from Escherichia coli O139:H28 (strain E24377A / ETEC).